We begin with the raw amino-acid sequence, 721 residues long: 1,4-alpha-glucan branching enzyme GlgB (721 aa).

Asp400 (nucleophile) is an active-site residue. Residue Glu453 is the Proton donor of the active site.

This sequence belongs to the glycosyl hydrolase 13 family. GlgB subfamily. In terms of assembly, monomer.

The catalysed reaction is Transfers a segment of a (1-&gt;4)-alpha-D-glucan chain to a primary hydroxy group in a similar glucan chain.. Its pathway is glycan biosynthesis; glycogen biosynthesis. In terms of biological role, catalyzes the formation of the alpha-1,6-glucosidic linkages in glycogen by scission of a 1,4-alpha-linked oligosaccharide from growing alpha-1,4-glucan chains and the subsequent attachment of the oligosaccharide to the alpha-1,6 position. In Chlamydia abortus (strain DSM 27085 / S26/3) (Chlamydophila abortus), this protein is 1,4-alpha-glucan branching enzyme GlgB.